The following is a 262-amino-acid chain: Cutinase 1 (262 aa).

Poly(ethylene terephthalate) is bound at residue Tyr61. Ser131 acts as the Nucleophile in catalysis. Residues Met132 and Trp156 each contribute to the poly(ethylene terephthalate) site. Catalysis depends on charge relay system residues Asp177 and His209. Cysteines 242 and 260 form a disulfide.

It belongs to the AB hydrolase superfamily.

It is found in the secreted. The protein localises to the periplasm. The enzyme catalyses (ethylene terephthalate)(n) + H2O = (ethylene terephthalate)(n-1) + 4-[(2-hydroxyethoxy)carbonyl]benzoate + H(+). The catalysed reaction is a butanoate ester + H2O = an aliphatic alcohol + butanoate + H(+). It carries out the reaction an acetyl ester + H2O = an aliphatic alcohol + acetate + H(+). It catalyses the reaction cutin + H2O = cutin monomers.. Catalyzes the hydrolysis of cutin, a polyester that forms the structure of plant cuticle. Shows esterase activity towards p-nitrophenol-linked aliphatic esters (pNP-aliphatic esters). Capable of degrading the plastic poly(ethylene terephthalate) (PET), the most abundant polyester plastic in the world. Capable of degrading the bioplastic poly(lactic acid) (PLLA). This Thermobifida cellulosilytica protein is Cutinase 1.